Here is a 470-residue protein sequence, read N- to C-terminus: MNPNQKIITIGSASIVLTTIGLLLQITSLCSIWFSHYNQVTQPHEQACSNNTTNYYNETFVNVTNVQNNYTTIIEPSAPNVVHYSSGRDLCPVKGWAPLSKDNGIRIGSRGEVFVIREPFISCSISECRTFFLTQGALLNDKHSNGTVKDRSPFRTLMSCPMGVAPSPSNSRFESVAWSATACSDGPGWLTLGITGPDATAVAVLKYNGIITDTLKSWKGNIMRTQESECVCQDEFCYTLITDGPSNAQAFYKILKIRKGKIVSVKDVNATGFHFEECSCYPSGTDVECVCRDNWRGSNRPWIRFNSDLDYQIGYVCSGIFGDNPRPVDGIGSCNSPVNNGKGRYGVKGFSFRYGDGVWIGRTKSLESRSGFEMVWDANGWVSTDKDSNGVQDIIDNNNWSGYSGSFSIRWETTGRNCTVPCFWVEMIRGQPKEKTIWTSGSSIAFCGVNSDTTGWSWPDGALLPFDIDK.

Over 1-6 the chain is Intravirion; the sequence is MNPNQK. A helical transmembrane segment spans residues 7-27; it reads IITIGSASIVLTTIGLLLQIT. The interval 11–33 is involved in apical transport and lipid raft association; it reads GSASIVLTTIGLLLQITSLCSIW. Over 28 to 470 the chain is Virion surface; sequence SLCSIWFSHY…GALLPFDIDK (443 aa). The hypervariable stalk region stretch occupies residues 36–88; the sequence is HYNQVTQPHEQACSNNTTNYYNETFVNVTNVQNNYTTIIEPSAPNVVHYSSGR. Residues Asn-50, Asn-51, Asn-57, Asn-62, and Asn-69 are each glycosylated (N-linked (GlcNAc...) asparagine; by host). Residues 90–470 are head of neuraminidase; it reads LCPVKGWAPL…GALLPFDIDK (381 aa). Intrachain disulfides connect Cys-91-Cys-418, Cys-123-Cys-128, Cys-183-Cys-230, Cys-232-Cys-237, Cys-278-Cys-291, Cys-280-Cys-289, Cys-317-Cys-334, and Cys-422-Cys-447. Residue Arg-117 coordinates substrate. N-linked (GlcNAc...) asparagine; by host glycosylation is present at Asn-145. Catalysis depends on Asp-150, which acts as the Proton donor/acceptor. Substrate is bound at residue Arg-151. Residue Asn-269 is glycosylated (N-linked (GlcNAc...) asparagine; by host). 276 to 277 lines the substrate pocket; it reads EE. A substrate-binding site is contributed by Arg-292. Positions 293, 297, and 323 each coordinate Ca(2+). Arg-369 contacts substrate. An N-linked (GlcNAc...) asparagine; by host glycan is attached at Asn-399. Tyr-403 (nucleophile) is an active-site residue. The N-linked (GlcNAc...) asparagine; by host glycan is linked to Asn-417.

Belongs to the glycosyl hydrolase 34 family. Homotetramer. Ca(2+) is required as a cofactor. N-glycosylated.

It localises to the virion membrane. It is found in the host apical cell membrane. The enzyme catalyses Hydrolysis of alpha-(2-&gt;3)-, alpha-(2-&gt;6)-, alpha-(2-&gt;8)- glycosidic linkages of terminal sialic acid residues in oligosaccharides, glycoproteins, glycolipids, colominic acid and synthetic substrates.. With respect to regulation, inhibited by the neuraminidase inhibitors zanamivir (Relenza) and oseltamivir (Tamiflu). These drugs interfere with the release of progeny virus from infected cells and are effective against all influenza strains. Resistance to neuraminidase inhibitors is quite rare. Functionally, catalyzes the removal of terminal sialic acid residues from viral and cellular glycoconjugates. Cleaves off the terminal sialic acids on the glycosylated HA during virus budding to facilitate virus release. Additionally helps virus spread through the circulation by further removing sialic acids from the cell surface. These cleavages prevent self-aggregation and ensure the efficient spread of the progeny virus from cell to cell. Otherwise, infection would be limited to one round of replication. Described as a receptor-destroying enzyme because it cleaves a terminal sialic acid from the cellular receptors. May facilitate viral invasion of the upper airways by cleaving the sialic acid moieties on the mucin of the airway epithelial cells. Likely to plays a role in the budding process through its association with lipid rafts during intracellular transport. May additionally display a raft-association independent effect on budding. Plays a role in the determination of host range restriction on replication and virulence. Sialidase activity in late endosome/lysosome traffic seems to enhance virus replication. In Influenza A virus (strain A/Turkey/Ontario/6118/1968 H8N4), this protein is Neuraminidase.